The following is an 88-amino-acid chain: Insulin-related peptide 4 (88 aa).

A signal peptide spans 1 to 19; the sequence is MKLTLIILLVVAYSWCSEA. Residues 20–45 constitute a propeptide that is removed on maturation; it reads QNEARVFCGRVLSERLAALCWGPNSV. R65 carries the arginine amide modification. Positions 69–88 are excised as a propeptide; the sequence is GLATECCDKACTVEELLSYC.

Belongs to the insulin family. As to expression, DAGWWLTRGAARSLGGVR-amide: Expressed in corpora cardiaca (CC), corpora allata (CA), antennal lobe (AL) and gnathal ganglion (GNG) (at protein level). Expression in CC and CA detected in most animals, in AL and GNG in few animals (at protein level).

It is found in the secreted. The protein is Insulin-related peptide 4 of Agrotis ipsilon (Black cutworm moth).